Reading from the N-terminus, the 150-residue chain is MSGKILDKMAGLLGLEDDLEEDLEEVEEETVEEEVTPLISSNTKRNNKVVSIHTAVSAKVKIIKPCSYEEAVDICDELKNRKIIIVNTTDLETKIAQRLLDFMGGASYALGGSLEEVEKSVYILAPSTVEVTNELKSQLISSKGIFNWNK.

This sequence belongs to the SepF family. Homodimer. Interacts with FtsZ.

The protein resides in the cytoplasm. Cell division protein that is part of the divisome complex and is recruited early to the Z-ring. Probably stimulates Z-ring formation, perhaps through the cross-linking of FtsZ protofilaments. Its function overlaps with FtsA. The sequence is that of Cell division protein SepF from Clostridium botulinum (strain Kyoto / Type A2).